The chain runs to 525 residues: Frizzled-4 (525 aa).

The N-terminal stretch at 1–24 is a signal peptide; that stretch reads MERRGGGGRMLALLLAGLLGGARG. Residues 25-200 lie on the Extracellular side of the membrane; that stretch reads FGDEEERRCD…KCGYDAGLYS (176 aa). An FZ domain is found at 28-149; the sequence is EEERRCDAIR…NDHNHMCMEG (122 aa). 8 disulfides stabilise this stretch: Cys33-Cys94, Cys41-Cys87, Cys78-Cys116, Cys105-Cys146, Cys109-Cys133, Cys169-Cys188, Cys192-Cys270, and Cys290-Cys365. A glycan (N-linked (GlcNAc...) asparagine) is linked at Asn47. Asn132 is a glycosylation site (N-linked (GlcNAc...) asparagine). A helical membrane pass occupies residues 201 to 231; it reads RSAKEFTDIWMAVWASLCFISTAFTVLTFLI. The Cytoplasmic portion of the chain corresponds to 232 to 237; that stretch reads DSSRFS. A helical membrane pass occupies residues 238–263; it reads YPERPIIFLSMCYNIYSIAYIVRLTV. The Extracellular segment spans residues 264–287; it reads GRERISCDFEEAAEPVLIQEGLKN. The chain crosses the membrane as a helical span at residues 288 to 321; it reads TGCAIIFLLMYFFGMASSIWWVILTLTWFLAAGL. The Cytoplasmic segment spans residues 322 to 324; it reads KWG. Residues 325–353 form a helical membrane-spanning segment; the sequence is HEAIEMHSSYFHIAAWAIPAVKTIVILIM. The Extracellular portion of the chain corresponds to 354–371; the sequence is RLVDADELTGLCYVGNQN. A helical membrane pass occupies residues 372–406; the sequence is LDALTGFVVAPLFTYLVIGTLFIAAGLVALFKIRS. Residues 407–419 lie on the Cytoplasmic side of the membrane; the sequence is NLQKDGTKTDKLE. The helical transmembrane segment at 420–448 threads the bilayer; the sequence is RLMVKIGVFSVLYTVPATCVIACYFYEIS. The Extracellular segment spans residues 449 to 461; it reads NWAVFRYSADDSN. Residues 462 to 483 traverse the membrane as a helical segment; sequence MAVEMLKIFMSLLVGITSGMWI. The Cytoplasmic segment spans residues 484 to 525; sequence WSAKTLHTWQKCSNRLVNSGKVKREKRADGWVKPGKGNETVV. A Lys-Thr-X-X-X-Trp motif, mediates interaction with the PDZ domain of Dvl family members motif is present at residues 487 to 492; the sequence is KTLHTW. A PDZ-binding motif is present at residues 523–525; that stretch reads TVV.

This sequence belongs to the G-protein coupled receptor Fz/Smo family. As to quaternary structure, interacts (via FZ domain) with TSKU; TSKU competes with WNT2B for binding to FZD4, inhibiting Wnt signaling and repressing peripheral eye development. Expressed in the developing kidney, interdigital spaces and optic cup.

It localises to the cell membrane. Functionally, receptor for Wnt proteins. Most frizzled receptors are coupled to the beta-catenin canonical signaling pathway, which leads to the activation of disheveled proteins, inhibition of GSK-3 kinase, nuclear accumulation of beta-catenin and activation of Wnt target genes. A second signaling pathway involving PKC and calcium fluxes has been seen for some family members, but it is not yet clear if it represents a distinct pathway or if it can be integrated in the canonical pathway, as PKC seems to be required for Wnt-mediated inactivation of GSK-3 kinase. Both pathways seem to involve interactions with G-proteins. May be involved in transduction and intercellular transmission of polarity information during tissue morphogenesis and/or in differentiated tissues. This Gallus gallus (Chicken) protein is Frizzled-4 (FZD4).